We begin with the raw amino-acid sequence, 564 residues long: Centrosomal protein kizuna (564 aa).

Positions 1-21 (MSEAGRAAAGPCPEVSPSRSQ) are disordered. Positions 28-50 (RCLRDSETRRLELERKLMEYKSS) form a coiled coil. Disordered regions lie at residues 178–201 (QPAA…PTQA), 304–345 (TGPQ…EDEP), 442–465 (ECGD…PNDS), 487–519 (IGNN…RPEF), and 531–564 (AFWG…DFYD). Residues 313 to 324 (QQAASQDSSSSS) are compositionally biased toward low complexity. Residues 447 to 463 (SSVQSNESSYSLPSIPN) show a composition bias toward polar residues. Residues 493 to 519 (EAKESQEMCSERSSSSERSGDLSRPEF) show a composition bias toward basic and acidic residues.

This sequence belongs to the kizuna family.

It is found in the cytoplasm. It localises to the cytoskeleton. The protein localises to the microtubule organizing center. The protein resides in the centrosome. Its subcellular location is the cilium basal body. Its function is as follows. Centrosomal protein required for establishing a robust mitotic centrosome architecture that can endure the forces that converge on the centrosomes during spindle formation. Required for stabilizing the expanded pericentriolar material around the centriole. The protein is Centrosomal protein kizuna (KIZ) of Gallus gallus (Chicken).